The sequence spans 376 residues: Rhodopsin (376 aa).

The Extracellular portion of the chain corresponds to 1 to 52 (MSSWSNQPAMDDYGLPSSNPYGNFTVVDMAPKDILHMIHPHWYQYPPMNPMM). Asparagine 23 carries N-linked (GlcNAc...) asparagine glycosylation. A helical membrane pass occupies residues 53 to 77 (YPLLLIFMLFTGILCLAGNFVTIWV). At 78–89 (FMNTKSLRTPAN) the chain is on the cytoplasmic side. The helical transmembrane segment at 90–112 (LLVVNLAMSDFLMMFTMFPPMMV) threads the bilayer. The Extracellular portion of the chain corresponds to 113–126 (TCYYHTWTLGPTFC). An intrachain disulfide couples cysteine 126 to cysteine 203. The helical transmembrane segment at 127-149 (QVYAFLGNLCGCASIWTMVFITF) threads the bilayer. A 'Ionic lock' involved in activated form stabilization motif is present at residues 150-152 (DRY). At 150–168 (DRYNVIVKGVAGEPLSTKK) the chain is on the cytoplasmic side. The chain crosses the membrane as a helical span at residues 169 to 189 (ASLWILTIWVLSITWCIAPFF). Residues 190 to 216 (GWNRYVPEGNLTGCGTDYLSEDILSRS) lie on the Extracellular side of the membrane. Asparagine 199 is a glycosylation site (N-linked (GlcNAc...) asparagine). Residues 217-237 (YLYDYSTWVYYLPLLPIYCYV) traverse the membrane as a helical segment. At 238 to 278 (SIIKAVAAHEKGMRDQAKKMGIKSLRNEEAQKTSAECRLAK) the chain is on the cytoplasmic side. Residues 279 to 300 (IAMTTVALWFIAWTPYLLINWV) traverse the membrane as a helical segment. Topologically, residues 301-311 (GMFARSYLSPV) are extracellular. A helical transmembrane segment spans residues 312 to 333 (YTIWGYVFAKANAVYNPIVYAI). An N6-(retinylidene)lysine modification is found at lysine 321. At 334-376 (SHPKYRAAMEKKLPCLSCKTESDDVSESASTTTSSAEEKAESA) the chain is on the cytoplasmic side. Residues 353 to 376 (TESDDVSESASTTTSSAEEKAESA) are disordered.

Belongs to the G-protein coupled receptor 1 family. Opsin subfamily. As to quaternary structure, homodimer. Interacts with GNAQ. Post-translationally, contains one covalently linked retinal chromophore. Detected on rhabdomere membranes on photoreceptor cells in the retina (at protein level).

It localises to the cell projection. Its subcellular location is the rhabdomere membrane. Photoreceptor required for image-forming vision at low light intensity. Can use both retinal and 3-dehydroretinal as visual pigment. Light-induced isomerization of 11-cis to all-trans retinal triggers a conformational change that activates signaling via G-proteins. Signaling via GNAQ probably mediates the activation of phospholipase C. The polypeptide is Rhodopsin (RHO) (Procambarus clarkii (Red swamp crayfish)).